Reading from the N-terminus, the 237-residue chain is 2-C-methyl-D-erythritol 4-phosphate cytidylyltransferase (237 aa).

It belongs to the IspD/TarI cytidylyltransferase family. IspD subfamily.

It carries out the reaction 2-C-methyl-D-erythritol 4-phosphate + CTP + H(+) = 4-CDP-2-C-methyl-D-erythritol + diphosphate. It functions in the pathway isoprenoid biosynthesis; isopentenyl diphosphate biosynthesis via DXP pathway; isopentenyl diphosphate from 1-deoxy-D-xylulose 5-phosphate: step 2/6. Functionally, catalyzes the formation of 4-diphosphocytidyl-2-C-methyl-D-erythritol from CTP and 2-C-methyl-D-erythritol 4-phosphate (MEP). This is 2-C-methyl-D-erythritol 4-phosphate cytidylyltransferase from Acaryochloris marina (strain MBIC 11017).